The primary structure comprises 462 residues: Metacaspase-1 (462 aa).

Over residues 1 to 21 the composition is skewed to pro residues; it reads MSYYPPPSGYPGGPPAYPPPQ. The disordered stretch occupies residues 1-150; the sequence is MSYYPPPSGY…PPPPSGSVAF (150 aa). Residues 22–33 show a composition bias toward low complexity; the sequence is QQQQQQQQYPSY. 2 stretches are compositionally biased toward pro residues: residues 49 to 69 and 77 to 102; these read PSYP…PPHS and SPQP…PPSP. Catalysis depends on residues His-253 and Cys-309.

It belongs to the peptidase C14B family.

Its function is as follows. Involved in cell death (apoptosis). This Coccidioides immitis (strain RS) (Valley fever fungus) protein is Metacaspase-1 (MCA1).